The primary structure comprises 596 residues: uncharacterized protein (596 aa).

A disordered region spans residues 1–31 (MSTSNDPVVSSHDPIKQEKEQETDLEAQVEH). The Cytoplasmic segment spans residues 1–37 (MSTSNDPVVSSHDPIKQEKEQETDLEAQVEHKKRNER). The segment covering 13 to 22 (DPIKQEKEQE) has biased composition (basic and acidic residues). A helical membrane pass occupies residues 38–58 (GNAFVGFLILIFVYYLLRGGS). At 59-596 (NDNDKQEMSH…ILVSDSGEEA (538 aa)) the chain is on the lumenal side. Asn118 is a glycosylation site (N-linked (GlcNAc...) asparagine). A Zn(2+)-binding site is contributed by His197. Asp199 is a catalytic residue. Asp232 contributes to the Zn(2+) binding site. Glu266 (proton acceptor) is an active-site residue. Zn(2+)-binding residues include Glu267 and Asp295. N-linked (GlcNAc...) asparagine glycans are attached at residues Asn466, Asn541, and Asn555. His565 serves as a coordination point for Zn(2+).

This sequence belongs to the peptidase M20A family. Zn(2+) serves as cofactor.

Its subcellular location is the vacuole membrane. This is an uncharacterized protein from Schizosaccharomyces pombe (strain 972 / ATCC 24843) (Fission yeast).